The following is a 247-amino-acid chain: 2,3-bisphosphoglycerate-dependent phosphoglycerate mutase (247 aa).

Residues 8–15 (RHGESTWN), 21–22 (TG), Arg60, 87–90 (ERHY), Lys98, 114–115 (RR), and 183–184 (GN) each bind substrate. His9 functions as the Tele-phosphohistidine intermediate in the catalytic mechanism. The active-site Proton donor/acceptor is Glu87.

This sequence belongs to the phosphoglycerate mutase family. BPG-dependent PGAM subfamily. Homodimer.

It catalyses the reaction (2R)-2-phosphoglycerate = (2R)-3-phosphoglycerate. Its pathway is carbohydrate degradation; glycolysis; pyruvate from D-glyceraldehyde 3-phosphate: step 3/5. Functionally, catalyzes the interconversion of 2-phosphoglycerate and 3-phosphoglycerate. This Acidovorax ebreus (strain TPSY) (Diaphorobacter sp. (strain TPSY)) protein is 2,3-bisphosphoglycerate-dependent phosphoglycerate mutase.